The chain runs to 81 residues: Large ribosomal subunit protein bL31B (81 aa).

It belongs to the bacterial ribosomal protein bL31 family. Type B subfamily. In terms of assembly, part of the 50S ribosomal subunit.

This is Large ribosomal subunit protein bL31B from Lactococcus lactis subsp. cremoris (strain MG1363).